A 382-amino-acid chain; its full sequence is Trophoblast glycoprotein-like (382 aa).

The first 26 residues, 1 to 26, serve as a signal peptide directing secretion; sequence MAPRAGQPGLQGLLLVAAALSQPAAP. 2 disulfides stabilise this stretch: cysteine 27–cysteine 33 and cysteine 31–cysteine 43. The Extracellular segment spans residues 27–307; sequence CPFQCYCFGG…EAAGPELEAS (281 aa). 5 LRR repeats span residues 57–80, 93–116, 117–140, 171–194, and 196–217; these read PPDA…AFAG, LPLL…AFDG, LPSL…AFRG, LAEL…ALRL, and RLEQ…ELRA. An N-linked (GlcNAc...) asparagine glycan is attached at asparagine 62. 2 disulfides stabilise this stretch: cysteine 238/cysteine 264 and cysteine 240/cysteine 285. The helical transmembrane segment at 308-328 threads the bilayer; sequence YVFFGLVLALIGLIFLMVLYL. Residues 329–382 are Cytoplasmic-facing; it reads NRRGIQRWMRNLREACRDQMEGYHYRYEQDADPRRAPAPAAPAGSRATSPGSGL. Positions 358-382 are disordered; the sequence is DADPRRAPAPAAPAGSRATSPGSGL. Residues 365 to 382 show a composition bias toward low complexity; it reads PAPAAPAGSRATSPGSGL.

Its subcellular location is the membrane. This Homo sapiens (Human) protein is Trophoblast glycoprotein-like (TPBGL).